A 1085-amino-acid chain; its full sequence is Aminopeptidase N (1085 aa).

Positions 1–30 (MKLTKGCAYKYIIFTVLILANILYDNKKRC) form a signal peptide, required for ER targeting and membrane association; not cleaved. The sufficient for targeting to the food vacuole stretch occupies residues 1 to 200 (MKLTKGCAYK…VKKNEPKIHY (200 aa)). A disordered region spans residues 108–130 (EKGDNNNNNHQNNNGNDNKKRLG). The segment covering 112–123 (NNNNNHQNNNGN) has biased composition (low complexity). Residues Glu319, Gly460, Ala461, and Glu463 each coordinate a peptide. Residue His496 coordinates Zn(2+). The active-site Proton acceptor is Glu497. The Zn(2+) site is built by His500 and Glu519.

The protein belongs to the peptidase M1 family. Heterodimer of the p68 form and the p35 form which are derived from the p120 precursor. Zn(2+) is required as a cofactor. In terms of processing, the full length protein appears to be cleaved into a 120 kDa precursor. This precursor is then proteolytically cleaved at the N-terminus generating a 96 kDa form which is further processed at the C-terminus into 68 kDa and 35 kDa forms that remain associated.

Its subcellular location is the parasitophorous vacuole membrane. The protein localises to the nucleus. The protein resides in the cytoplasm. It is found in the vacuole lumen. Its activity is regulated as follows. Inhibited by 1,10-phenanthroline, EDTA and bestatin. Inhibited by (Benzyl)Tyr-Ala (BTA). Activity is not affected by phosphoramidin, PMSF, leupeptin, iodoacetamide or pepstatin. Its function is as follows. Displays aminopeptidase activity with a broad substrate specificity. Preferentially, cleaves after Leu and Met, but also cleaves after Ala and Arg. Low activity towards Lys, Phe, Tyr, Trp, Gln, Ser and Gly and negligible activity towards Glu, Asp, Pro, Ile, Thr, Val, His and Asn. Has dipeptidase activity. Plays a role in the terminal stages of host hemoglobin digestion by cleaving the N-terminal residue of small hemoglobin-derived oligopeptides. The sequence is that of Aminopeptidase N from Plasmodium falciparum (isolate 3D7).